A 147-amino-acid polypeptide reads, in one-letter code: Allograft inflammatory factor 1 (147 aa).

At serine 2 the chain carries N-acetylserine. The residue at position 11 (lysine 11) is an N6-acetyllysine. Serine 39 is subject to Phosphoserine. Positions 45-80 constitute an EF-hand 1 domain; the sequence is SKLEAFKTKYMEFDLNGNGDIDIMSLKRMLEKLGVP. The Ca(2+) site is built by aspartate 58, asparagine 60, asparagine 62, aspartate 64, glutamate 98, threonine 100, and aspartate 105. Residues 81-115 enclose the EF-hand 2; degenerate domain; it reads KTHLELKKLIREVSSGSEETFSYSDFLRMMLGKRS. A disordered region spans residues 127-147; it reads KNKEHQKPTGPPAKKAISELP.

In terms of assembly, homodimer (Potential). Monomer. Interacts with LCP1. As to expression, cardiac allograft, spleen and testis. Expressed by inflammatory cells (macrophages and neutrophils).

Its subcellular location is the cytoplasm. The protein resides in the cytoskeleton. The protein localises to the cell projection. It is found in the ruffle membrane. It localises to the phagocytic cup. Functionally, actin-binding protein that enhances membrane ruffling and RAC activation. Enhances the actin-bundling activity of LCP1. Binds calcium. Plays a role in RAC signaling and in phagocytosis. May play an role in macrophage activation and function. Promotes the proliferation of vascular smooth muscle cells and of T-lymphocytes. Enhances lymphocyte migration. Plays a role in vascular inflammation. This Rattus norvegicus (Rat) protein is Allograft inflammatory factor 1 (Aif1).